Consider the following 397-residue polypeptide: 3-ketoacyl-CoA thiolase, mitochondrial (397 aa).

The transit peptide at 1–16 (MALLRGVFIVAAKRTP) directs the protein to the mitochondrion; not cleaved. At Lys-25 the chain carries N6-acetyllysine; alternate. N6-succinyllysine; alternate is present on Lys-25. Ser-28 is subject to Phosphoserine. Lys-45 carries the N6-succinyllysine modification. Catalysis depends on Cys-92, which acts as the Acyl-thioester intermediate. A Phosphothreonine modification is found at Thr-119. Ser-121 is subject to Phosphoserine. A Phosphotyrosine modification is found at Tyr-127. Thr-136 carries the phosphothreonine modification. 6 positions are modified to N6-acetyllysine; alternate: Lys-137, Lys-143, Lys-158, Lys-171, Lys-191, and Lys-209. Residues Lys-137, Lys-143, Lys-158, Lys-171, Lys-191, and Lys-209 each carry the N6-succinyllysine; alternate modification. 3 positions are modified to N6-succinyllysine: Lys-211, Lys-212, and Lys-214. Positions 224 and 227 each coordinate CoA. The residue at position 234 (Lys-234) is an N6-acetyllysine; alternate. An N6-succinyllysine; alternate modification is found at Lys-234. Lys-240 carries the N6-succinyllysine modification. Lys-241 carries the post-translational modification N6-acetyllysine. Ser-251 lines the CoA pocket. N6-acetyllysine occurs at positions 269 and 270. The residue at position 305 (Lys-305) is an N6-acetyllysine; alternate. Lys-305 bears the N6-succinyllysine; alternate mark. Ser-310 is modified (phosphoserine). Position 312 is an N6-acetyllysine; alternate (Lys-312). Lys-312 carries the N6-succinyllysine; alternate modification. At Lys-340 the chain carries N6-acetyllysine. The residue at position 344 (Ser-344) is a Phosphoserine. The residue at position 375 (Lys-375) is an N6-acetyllysine. The active-site Proton donor/acceptor is Cys-382.

It belongs to the thiolase-like superfamily. Thiolase family. Homotetramer. Interacts with BNIP3.

The protein localises to the mitochondrion. It catalyses the reaction an acyl-CoA + acetyl-CoA = a 3-oxoacyl-CoA + CoA. The catalysed reaction is 2 acetyl-CoA = acetoacetyl-CoA + CoA. The enzyme catalyses acetyl-CoA + H2O = acetate + CoA + H(+). It carries out the reaction propanoyl-CoA + H2O = propanoate + CoA + H(+). It catalyses the reaction butanoyl-CoA + H2O = butanoate + CoA + H(+). The catalysed reaction is hexanoyl-CoA + H2O = hexanoate + CoA + H(+). The enzyme catalyses octanoyl-CoA + H2O = octanoate + CoA + H(+). It carries out the reaction decanoyl-CoA + H2O = decanoate + CoA + H(+). It catalyses the reaction dodecanoyl-CoA + H2O = dodecanoate + CoA + H(+). The catalysed reaction is tetradecanoyl-CoA + H2O = tetradecanoate + CoA + H(+). The enzyme catalyses hexadecanoyl-CoA + H2O = hexadecanoate + CoA + H(+). Its pathway is lipid metabolism; fatty acid beta-oxidation. Its function is as follows. In the production of energy from fats, this is one of the enzymes that catalyzes the last step of the mitochondrial beta-oxidation pathway, an aerobic process breaking down fatty acids into acetyl-CoA. Using free coenzyme A/CoA, catalyzes the thiolytic cleavage of medium- to long-chain unbranched 3-oxoacyl-CoAs into acetyl-CoA and a fatty acyl-CoA shortened by two carbon atoms. Also catalyzes the condensation of two acetyl-CoA molecules into acetoacetyl-CoA and could be involved in the production of ketone bodies. Also displays hydrolase activity on various fatty acyl-CoAs. Thereby, could be responsible for the production of acetate in a side reaction to beta-oxidation. Abolishes BNIP3-mediated apoptosis and mitochondrial damage. In Mus musculus (Mouse), this protein is 3-ketoacyl-CoA thiolase, mitochondrial (Acaa2).